The chain runs to 279 residues: Large ribosomal subunit protein uL2 (279 aa).

2 disordered regions span residues 32 to 58 and 223 to 279; these read SLLT…GGGH and GVAM…RKRG. 2 stretches are compositionally biased toward basic residues: residues 40–58 and 269–279; these read KGGR…GGGH and VRRRYATRKRG.

It belongs to the universal ribosomal protein uL2 family. Part of the 50S ribosomal subunit. Forms a bridge to the 30S subunit in the 70S ribosome.

In terms of biological role, one of the primary rRNA binding proteins. Required for association of the 30S and 50S subunits to form the 70S ribosome, for tRNA binding and peptide bond formation. It has been suggested to have peptidyltransferase activity; this is somewhat controversial. Makes several contacts with the 16S rRNA in the 70S ribosome. In Salinispora tropica (strain ATCC BAA-916 / DSM 44818 / JCM 13857 / NBRC 105044 / CNB-440), this protein is Large ribosomal subunit protein uL2.